Consider the following 324-residue polypeptide: Clavaminate synthase 1 (324 aa).

The Fe cation site is built by His144, Glu146, and His279. Position 293 (Arg293) interacts with 2-oxoglutarate.

This sequence belongs to the clavaminate synthase family. Fe(2+) serves as cofactor.

The enzyme catalyses deoxyamidinoproclavaminate + 2-oxoglutarate + O2 = amidinoproclavaminate + succinate + CO2. It catalyses the reaction proclavaminate + 2-oxoglutarate + O2 = dihydroclavaminate + succinate + CO2 + H2O. The catalysed reaction is dihydroclavaminate + 2-oxoglutarate + O2 = clavaminate + succinate + CO2 + H2O. The protein operates within antibiotic biosynthesis; clavulanate biosynthesis; clavulanate from D-glyceraldehyde 3-phosphate and L-arginine: step 3/8. It functions in the pathway antibiotic biosynthesis; clavulanate biosynthesis; clavulanate from D-glyceraldehyde 3-phosphate and L-arginine: step 5/8. Its pathway is antibiotic biosynthesis; clavulanate biosynthesis; clavulanate from D-glyceraldehyde 3-phosphate and L-arginine: step 6/8. This Streptomyces clavuligerus protein is Clavaminate synthase 1 (cs1).